Consider the following 556-residue polypeptide: 2-succinyl-5-enolpyruvyl-6-hydroxy-3-cyclohexene-1-carboxylate synthase (556 aa).

It belongs to the TPP enzyme family. MenD subfamily. Homodimer. Requires Mg(2+) as cofactor. It depends on Mn(2+) as a cofactor. Thiamine diphosphate is required as a cofactor.

It catalyses the reaction isochorismate + 2-oxoglutarate + H(+) = 5-enolpyruvoyl-6-hydroxy-2-succinyl-cyclohex-3-ene-1-carboxylate + CO2. It participates in quinol/quinone metabolism; 1,4-dihydroxy-2-naphthoate biosynthesis; 1,4-dihydroxy-2-naphthoate from chorismate: step 2/7. The protein operates within quinol/quinone metabolism; menaquinone biosynthesis. Its function is as follows. Catalyzes the thiamine diphosphate-dependent decarboxylation of 2-oxoglutarate and the subsequent addition of the resulting succinic semialdehyde-thiamine pyrophosphate anion to isochorismate to yield 2-succinyl-5-enolpyruvyl-6-hydroxy-3-cyclohexene-1-carboxylate (SEPHCHC). The sequence is that of 2-succinyl-5-enolpyruvyl-6-hydroxy-3-cyclohexene-1-carboxylate synthase from Escherichia coli O8 (strain IAI1).